A 111-amino-acid chain; its full sequence is Photosystem II reaction center Psb28 protein (111 aa).

It belongs to the Psb28 family. As to quaternary structure, part of the photosystem II complex.

It localises to the cellular thylakoid membrane. In Crocosphaera subtropica (strain ATCC 51142 / BH68) (Cyanothece sp. (strain ATCC 51142)), this protein is Photosystem II reaction center Psb28 protein.